The sequence spans 214 residues: Ras-related protein Rab2BV (214 aa).

19-26 (GDSGVGKS) serves as a coordination point for GTP. Positions 41 to 49 (SKSTIGVEF) match the Effector region motif. Residues 67-71 (DTAGQ) and 125-128 (NKSD) each bind GTP. S-geranylgeranyl cysteine attachment occurs at residues Cys-211 and Cys-212.

The protein belongs to the small GTPase superfamily. Rab family.

It is found in the cell membrane. In Beta vulgaris (Sugar beet), this protein is Ras-related protein Rab2BV (RAB2BV).